A 188-amino-acid chain; its full sequence is Photosystem I assembly protein Ycf4 (188 aa).

2 helical membrane-spanning segments follow: residues 26–48 (FFWA…SSYF) and 63–85 (FIPQ…GYLW).

It belongs to the Ycf4 family.

Its subcellular location is the cellular thylakoid membrane. Its function is as follows. Seems to be required for the assembly of the photosystem I complex. This is Photosystem I assembly protein Ycf4 from Synechocystis sp. (strain ATCC 27184 / PCC 6803 / Kazusa).